A 287-amino-acid chain; its full sequence is Ribonuclease Z (287 aa).

Positions 64, 66, 68, 69, 124, 191, and 250 each coordinate Zn(2+). Asp-68 acts as the Proton acceptor in catalysis.

It belongs to the RNase Z family. Homodimer. It depends on Zn(2+) as a cofactor.

It catalyses the reaction Endonucleolytic cleavage of RNA, removing extra 3' nucleotides from tRNA precursor, generating 3' termini of tRNAs. A 3'-hydroxy group is left at the tRNA terminus and a 5'-phosphoryl group is left at the trailer molecule.. Zinc phosphodiesterase, which displays some tRNA 3'-processing endonuclease activity. Probably involved in tRNA maturation, by removing a 3'-trailer from precursor tRNA. The chain is Ribonuclease Z from Pyrobaculum islandicum (strain DSM 4184 / JCM 9189 / GEO3).